We begin with the raw amino-acid sequence, 226 residues long: MEGIFTFFGVISENHTFLFVSHMFLAALLTLIVAKLATKRLQVVPTGCQNVMEAYLEGVVAMGRDVIGESYAKKYLPLVATLGLFIFFANLMEIIPGFEPPSGNINFTLALALIVFIYYNFEGIRKNGVIHYFAHFAGPVKLLAPLMFPIEIVSHISRIISLSFRLFGNIKGDDLFVWVLLMLAPWIVPLPGFALMTFSAFLQTFIFMILTYVYLAGAVLLHEESL.

Transmembrane regions (helical) follow at residues phenylalanine 17–alanine 37, leucine 78–phenylalanine 98, asparagine 104–isoleucine 124, leucine 175–leucine 195, and phenylalanine 201–leucine 221.

Belongs to the ATPase A chain family. As to quaternary structure, F-type ATPases have 2 components, CF(1) - the catalytic core - and CF(0) - the membrane proton channel. CF(1) has five subunits: alpha(3), beta(3), gamma(1), delta(1), epsilon(1). CF(0) has three main subunits: a(1), b(2) and c(9-12). The alpha and beta chains form an alternating ring which encloses part of the gamma chain. CF(1) is attached to CF(0) by a central stalk formed by the gamma and epsilon chains, while a peripheral stalk is formed by the delta and b chains.

It is found in the cell inner membrane. Key component of the proton channel; it plays a direct role in the translocation of protons across the membrane. This is ATP synthase subunit a from Nitratiruptor sp. (strain SB155-2).